The sequence spans 142 residues: Taurine up-regulated 1 protein (142 aa).

The N-terminal stretch at 1 to 40 is a signal peptide; the sequence is MARPPPLPGLVGRRSGRAVDRAIGWRLFLLLWHPALGAQA. Residues 41 to 123 lie on the Extracellular side of the membrane; it reads RPPRRAPGGR…ARTQLEGQEG (83 aa). Residues 124–140 form a helical membrane-spanning segment; the sequence is AGGWLVVGFLLCLFLLM. Residues 141–142 lie on the Cytoplasmic side of the membrane; it reads PP.

In terms of tissue distribution, widely expressed in the adult with highest levels in placenta and testis. Also expressed in a number of embryonic tissues at multiple embryonic stages.

Its subcellular location is the nucleus membrane. It localises to the mitochondrion membrane. The protein localises to the cytoplasm. The sequence is that of Taurine up-regulated 1 protein from Mus musculus (Mouse).